The chain runs to 254 residues: RxLR effector protein CRE5 (254 aa).

The signal sequence occupies residues 1-19; sequence MQTIQLIIFVAFVLSRAAA. A glycan (N-linked (GlcNAc...) asparagine) is linked at Asn-49. A RxLR-dEER motif is present at residues 53 to 63; sequence RSLRQHEGEDR. In terms of domain architecture, Nudix hydrolase spans 191 to 254; sequence SRWLSAGVVT…MEEGGVCRAL (64 aa). The Nudix box motif lies at 228–249; sequence GGWDRGEKIKKAALREVMEEGG.

The protein in the N-terminal section; belongs to the RxLR effector family. This sequence in the C-terminal section; belongs to the Nudix hydrolase family.

It is found in the secreted. It localises to the host cytoplasm. The protein localises to the host nucleus. The protein resides in the host nucleolus. Effector that is involved in host plant infection. Contributes to virulence during the early infection stage, by inhibiting plant defense responses induced by both PAMP-triggered immunity (PTI) and effector-triggered immunity (ETI). The polypeptide is RxLR effector protein CRE5 (Phytophthora infestans (strain T30-4) (Potato late blight agent)).